The chain runs to 100 residues: MNLTPREKDKLLVSLAAIVARGRLERGVKLNHPEAIALITDYVVEGARDGRSVADLMQAGAQVVRAEQCMPGIPEMIHDVQVEATFPDGTKLVTVHHPIR.

Belongs to the urease gamma subunit family. Heterotrimer of UreA (gamma), UreB (beta) and UreC (alpha) subunits. Three heterotrimers associate to form the active enzyme.

The protein resides in the cytoplasm. It carries out the reaction urea + 2 H2O + H(+) = hydrogencarbonate + 2 NH4(+). The protein operates within nitrogen metabolism; urea degradation; CO(2) and NH(3) from urea (urease route): step 1/1. In Dinoroseobacter shibae (strain DSM 16493 / NCIMB 14021 / DFL 12), this protein is Urease subunit gamma.